Consider the following 173-residue polypeptide: Transmembrane protein 240 (173 aa).

A run of 2 helical transmembrane segments spans residues 5-25 (ANTM…ACLM) and 90-110 (LMLG…MDGV). Phosphoserine is present on serine 169.

The protein belongs to the TMEM240 family.

Its subcellular location is the synapse. It is found in the cell membrane. The chain is Transmembrane protein 240 (TMEM240) from Homo sapiens (Human).